Here is a 146-residue protein sequence, read N- to C-terminus: Hemoglobin subunit beta-1 (146 aa).

Positions glycine 2 to histidine 146 constitute a Globin domain. Heme b-binding residues include histidine 63 and histidine 92.

This sequence belongs to the globin family. As to quaternary structure, heterotetramer of two alpha chains and two beta chains. Red blood cells.

Involved in oxygen transport from the lung to the various peripheral tissues. This Xenopus laevis (African clawed frog) protein is Hemoglobin subunit beta-1 (hbb1).